The chain runs to 600 residues: DNA polymerase alpha subunit B (600 aa).

The interval A112–R167 is disordered. Polar residues predominate over residues S125–R140. At S126 the chain carries Phosphoserine. A phosphothreonine mark is found at T127 and T130. Phosphoserine occurs at positions 141, 147, 152, and 154. Over residues S141–S158 the composition is skewed to low complexity.

Belongs to the DNA polymerase alpha subunit B family. In terms of assembly, component of the alpha DNA polymerase complex (also known as the alpha DNA polymerase-primase complex) consisting of four subunits: the catalytic subunit POLA1, the regulatory subunit POLA2, and the primase complex subunits PRIM1 and PRIM2 respectively. Within the complex, POLA1 directly interacts with PRIM2. Post-translationally, phosphorylated in a cell cycle-dependent manner, in G2/M phase.

The protein resides in the nucleus. Functionally, accessory subunit of the DNA polymerase alpha complex (also known as the alpha DNA polymerase-primase complex) which plays an essential role in the initiation of DNA synthesis. During the S phase of the cell cycle, the DNA polymerase alpha complex (composed of a catalytic subunit POLA1, an accessory subunit POLA2 and two primase subunits, the catalytic subunit PRIM1 and the regulatory subunit PRIM2) is recruited to DNA at the replicative forks via direct interactions with MCM10 and WDHD1. The primase subunit of the polymerase alpha complex initiates DNA synthesis by oligomerising short RNA primers on both leading and lagging strands. These primers are initially extended by the polymerase alpha catalytic subunit and subsequently transferred to polymerase delta and polymerase epsilon for processive synthesis on the lagging and leading strand, respectively. This is DNA polymerase alpha subunit B (Pola2) from Rattus norvegicus (Rat).